The following is a 228-amino-acid chain: Putative N-acetylmannosamine-6-phosphate 2-epimerase (228 aa).

Belongs to the NanE family.

It carries out the reaction an N-acyl-D-glucosamine 6-phosphate = an N-acyl-D-mannosamine 6-phosphate. It participates in amino-sugar metabolism; N-acetylneuraminate degradation; D-fructose 6-phosphate from N-acetylneuraminate: step 3/5. Its function is as follows. Converts N-acetylmannosamine-6-phosphate (ManNAc-6-P) to N-acetylglucosamine-6-phosphate (GlcNAc-6-P). This chain is Putative N-acetylmannosamine-6-phosphate 2-epimerase, found in Pasteurella multocida (strain Pm70).